The chain runs to 57 residues: Small ribosomal subunit protein bS21 (57 aa).

Belongs to the bacterial ribosomal protein bS21 family.

This Geobacillus kaustophilus (strain HTA426) protein is Small ribosomal subunit protein bS21.